Reading from the N-terminus, the 360-residue chain is Peptide chain release factor 1 (360 aa).

Q235 carries the post-translational modification N5-methylglutamine. The segment covering 283–308 (MQKRQQAEASERRNLLGSGDRSDRNR) has biased composition (basic and acidic residues). The interval 283-313 (MQKRQQAEASERRNLLGSGDRSDRNRTYNFP) is disordered.

The protein belongs to the prokaryotic/mitochondrial release factor family. In terms of processing, methylated by PrmC. Methylation increases the termination efficiency of RF1.

Its subcellular location is the cytoplasm. Its function is as follows. Peptide chain release factor 1 directs the termination of translation in response to the peptide chain termination codons UAG and UAA. This is Peptide chain release factor 1 from Yersinia enterocolitica serotype O:8 / biotype 1B (strain NCTC 13174 / 8081).